The following is a 173-amino-acid chain: Crossover junction endodeoxyribonuclease RuvC (173 aa).

Catalysis depends on residues Asp8, Glu67, and Asp139. Mg(2+) contacts are provided by Asp8, Glu67, and Asp139.

This sequence belongs to the RuvC family. As to quaternary structure, homodimer which binds Holliday junction (HJ) DNA. The HJ becomes 2-fold symmetrical on binding to RuvC with unstacked arms; it has a different conformation from HJ DNA in complex with RuvA. In the full resolvosome a probable DNA-RuvA(4)-RuvB(12)-RuvC(2) complex forms which resolves the HJ. It depends on Mg(2+) as a cofactor.

The protein localises to the cytoplasm. The enzyme catalyses Endonucleolytic cleavage at a junction such as a reciprocal single-stranded crossover between two homologous DNA duplexes (Holliday junction).. The RuvA-RuvB-RuvC complex processes Holliday junction (HJ) DNA during genetic recombination and DNA repair. Endonuclease that resolves HJ intermediates. Cleaves cruciform DNA by making single-stranded nicks across the HJ at symmetrical positions within the homologous arms, yielding a 5'-phosphate and a 3'-hydroxyl group; requires a central core of homology in the junction. The consensus cleavage sequence is 5'-(A/T)TT(C/G)-3'. Cleavage occurs on the 3'-side of the TT dinucleotide at the point of strand exchange. HJ branch migration catalyzed by RuvA-RuvB allows RuvC to scan DNA until it finds its consensus sequence, where it cleaves and resolves the cruciform DNA. This Citrobacter koseri (strain ATCC BAA-895 / CDC 4225-83 / SGSC4696) protein is Crossover junction endodeoxyribonuclease RuvC.